A 162-amino-acid chain; its full sequence is MHLADLIETTLIGMGYELVELERAPAGLLRVYIDQPETGIVIEDCEKVSRQLTHVLTVENVDYERLEVSSPGLDRPLKKLADFVRFAGAEVRVTLRLPVNGQKNFVGILCEPAGDAGAEKIGLEFEGKDGPALLEFAISDVDRARLVPVIDFKGNQRKGNKQ.

This sequence belongs to the RimP family.

It is found in the cytoplasm. Its function is as follows. Required for maturation of 30S ribosomal subunits. The protein is Ribosome maturation factor RimP of Cupriavidus metallidurans (strain ATCC 43123 / DSM 2839 / NBRC 102507 / CH34) (Ralstonia metallidurans).